We begin with the raw amino-acid sequence, 128 residues long: uncharacterized protein (128 aa).

Residues 24–43 (KRTQNNTEQASRAINSPLQS) form a disordered region. The span at 26-43 (TQNNTEQASRAINSPLQS) shows a compositional bias: polar residues.

This is an uncharacterized protein from Homo sapiens (Human).